The following is a 336-amino-acid chain: MEKYSFESVQELSLRPNVWEEYIGQEKIKKNLKVFIEASKKRKECLDHILFFGPPGLGKTTLSHIIAHEMGCNIKVSAAPMIEKSGDLAAILTNLNEGDILFIDEIHRLSPAIEEILYPAMEDFRLDIIIGSGPAAQTLKIDLAPFTLIGATTRAGMLSNPLRDRFGMSFRLQFYEPKELSAIVICASSKLGRSLSKSGADEIARRSRGTPRIALRLLRRVRDFADVGEYAQDMRNQSEISLECVRYALNELGVNELGFDELDLRYLAILAESRGKAIGLNTIAAAMSEDEATIEDVIEPYLLANGYLERTAKGRVASPKTYELLHIPFLEQKGLF.

Positions 1 to 175 are large ATPase domain (RuvB-L); the sequence is MEKYSFESVQ…FGMSFRLQFY (175 aa). ATP is bound by residues Leu-14, Arg-15, Gly-56, Lys-59, Thr-60, Thr-61, 122-124, Arg-165, Tyr-175, and Arg-212; that span reads EDF. Mg(2+) is bound at residue Thr-60. The small ATPAse domain (RuvB-S) stretch occupies residues 176–253; the sequence is EPKELSAIVI…CVRYALNELG (78 aa). Residues 256–336 form a head domain (RuvB-H) region; that stretch reads ELGFDELDLR…IPFLEQKGLF (81 aa). DNA-binding residues include Arg-310 and Arg-315.

This sequence belongs to the RuvB family. In terms of assembly, homohexamer. Forms an RuvA(8)-RuvB(12)-Holliday junction (HJ) complex. HJ DNA is sandwiched between 2 RuvA tetramers; dsDNA enters through RuvA and exits via RuvB. An RuvB hexamer assembles on each DNA strand where it exits the tetramer. Each RuvB hexamer is contacted by two RuvA subunits (via domain III) on 2 adjacent RuvB subunits; this complex drives branch migration. In the full resolvosome a probable DNA-RuvA(4)-RuvB(12)-RuvC(2) complex forms which resolves the HJ.

The protein resides in the cytoplasm. The catalysed reaction is ATP + H2O = ADP + phosphate + H(+). In terms of biological role, the RuvA-RuvB-RuvC complex processes Holliday junction (HJ) DNA during genetic recombination and DNA repair, while the RuvA-RuvB complex plays an important role in the rescue of blocked DNA replication forks via replication fork reversal (RFR). RuvA specifically binds to HJ cruciform DNA, conferring on it an open structure. The RuvB hexamer acts as an ATP-dependent pump, pulling dsDNA into and through the RuvAB complex. RuvB forms 2 homohexamers on either side of HJ DNA bound by 1 or 2 RuvA tetramers; 4 subunits per hexamer contact DNA at a time. Coordinated motions by a converter formed by DNA-disengaged RuvB subunits stimulates ATP hydrolysis and nucleotide exchange. Immobilization of the converter enables RuvB to convert the ATP-contained energy into a lever motion, pulling 2 nucleotides of DNA out of the RuvA tetramer per ATP hydrolyzed, thus driving DNA branch migration. The RuvB motors rotate together with the DNA substrate, which together with the progressing nucleotide cycle form the mechanistic basis for DNA recombination by continuous HJ branch migration. Branch migration allows RuvC to scan DNA until it finds its consensus sequence, where it cleaves and resolves cruciform DNA. In Helicobacter hepaticus (strain ATCC 51449 / 3B1), this protein is Holliday junction branch migration complex subunit RuvB.